The sequence spans 229 residues: MPPAEALEALRLMAWLSPGYPVGAYAYSHGLEWAVEAGDVRDEASLTAWLRDVCERGALRNDLILAAQAHAAARTSDGAALVAVNDLALALAPSRELHLETSQQGRSFLDATRGAWPCDALAALAEELPGPVAYPVAVGLAAGAHGMAPEPVLAAYGLAFLQNLVSAALRAAPVGQAAGTRVVAALAPRLAGLAEAAAASDLDALGAATFRLDLGSFRHETQYSRIFRS.

This sequence belongs to the UreF family. In terms of assembly, ureD, UreF and UreG form a complex that acts as a GTP-hydrolysis-dependent molecular chaperone, activating the urease apoprotein by helping to assemble the nickel containing metallocenter of UreC. The UreE protein probably delivers the nickel.

The protein localises to the cytoplasm. Functionally, required for maturation of urease via the functional incorporation of the urease nickel metallocenter. This Methylobacterium radiotolerans (strain ATCC 27329 / DSM 1819 / JCM 2831 / NBRC 15690 / NCIMB 10815 / 0-1) protein is Urease accessory protein UreF.